A 428-amino-acid chain; its full sequence is Spermidine/putrescine import ATP-binding protein PotA (428 aa).

Residues 6–238 enclose the ABC transporter domain; sequence IEFKNVSKTY…PINHFVADFI (233 aa). ATP is bound at residue 40-47; sequence GASGSGKS.

Belongs to the ABC transporter superfamily. Spermidine/putrescine importer (TC 3.A.1.11.1) family. In terms of assembly, the complex is composed of two ATP-binding proteins (PotA), two transmembrane proteins (PotB and PotC) and a solute-binding protein (PotD).

The protein localises to the cell membrane. The catalysed reaction is ATP + H2O + polyamine-[polyamine-binding protein]Side 1 = ADP + phosphate + polyamineSide 2 + [polyamine-binding protein]Side 1.. Its function is as follows. Part of the ABC transporter complex PotABCD involved in spermidine/putrescine import. Responsible for energy coupling to the transport system. The polypeptide is Spermidine/putrescine import ATP-binding protein PotA (Lactococcus lactis subsp. lactis (strain IL1403) (Streptococcus lactis)).